A 330-amino-acid chain; its full sequence is Mas-related G-protein coupled receptor member B8 (330 aa).

The Extracellular portion of the chain corresponds to 1–33; it reads MDSSFPDWNIEFREQNESYFMESSSCDMSLAMS. N16 is a glycosylation site (N-linked (GlcNAc...) asparagine). A helical membrane pass occupies residues 34 to 54; it reads LLSIIIAIIGLTGNVIVLQLL. The Cytoplasmic segment spans residues 55 to 62; it reads GFHMHRNA. The helical transmembrane segment at 63-83 threads the bilayer; the sequence is FSVYIFNLSGANFLFLCTHIV. Topologically, residues 84 to 101 are extracellular; it reads FSLENLIRQFHYIDIHMA. The helical transmembrane segment at 102–122 threads the bilayer; the sequence is LFSVNVTILAYLAGVSMITAI. Topologically, residues 123 to 146 are cytoplasmic; sequence SVEYWLSVLWPTWYHAQRPKHTST. A helical transmembrane segment spans residues 147–167; it reads VICTLLWVFSLLLTLWNWIIC. The Extracellular portion of the chain corresponds to 168–177; the sequence is KVLDYIYNWD. Residues 178 to 198 form a helical membrane-spanning segment; the sequence is MCWKLALIIVVWLLVLFVVLS. The Cytoplasmic segment spans residues 199–219; that stretch reads RSNQALLFRVFCGSQQTPVTR. The chain crosses the membrane as a helical span at residues 220 to 240; that stretch reads LLVTIMLTALVVLICGFGIGI. Over 241–260 the chain is Extracellular; the sequence is CFFYWKKEENSIMPCGYFYE. Residues 261–281 form a helical membrane-spanning segment; it reads TILLLSGVNSCANPIICLFVG. At 282–330 the chain is on the cytoplasmic side; that stretch reads SIKHCQFQCGTLRLILQRAIQESPEEEDEEVEEVVEQEGGEEDEESTTL. The disordered stretch occupies residues 302–330; sequence QESPEEEDEEVEEVVEQEGGEEDEESTTL. Residues 304–330 show a composition bias toward acidic residues; that stretch reads SPEEEDEEVEEVVEQEGGEEDEESTTL.

This sequence belongs to the G-protein coupled receptor 1 family. Mas subfamily.

It is found in the membrane. Orphan receptor. Probably involved in the function of nociceptive neurons. May regulate nociceptor function and/or development, including the sensation or modulation of pain. The chain is Mas-related G-protein coupled receptor member B8 (Mrgprb8) from Mus musculus (Mouse).